Here is a 166-residue protein sequence, read N- to C-terminus: Phosphopantetheine adenylyltransferase (166 aa).

S11 lines the substrate pocket. ATP is bound by residues 11 to 12 (SF) and H19. Substrate contacts are provided by K43, A76, and R90. Residues 91–93 (GLR), E101, and 126–132 (LQPISSS) each bind ATP.

It belongs to the bacterial CoaD family. As to quaternary structure, homohexamer. It depends on Mg(2+) as a cofactor.

The protein resides in the cytoplasm. The catalysed reaction is (R)-4'-phosphopantetheine + ATP + H(+) = 3'-dephospho-CoA + diphosphate. It functions in the pathway cofactor biosynthesis; coenzyme A biosynthesis; CoA from (R)-pantothenate: step 4/5. Functionally, reversibly transfers an adenylyl group from ATP to 4'-phosphopantetheine, yielding dephospho-CoA (dPCoA) and pyrophosphate. The protein is Phosphopantetheine adenylyltransferase of Streptococcus equi subsp. zooepidemicus (strain H70).